The sequence spans 86 residues: Small ribosomal subunit protein bS20 (86 aa).

Belongs to the bacterial ribosomal protein bS20 family.

Binds directly to 16S ribosomal RNA. The polypeptide is Small ribosomal subunit protein bS20 (Oceanobacillus iheyensis (strain DSM 14371 / CIP 107618 / JCM 11309 / KCTC 3954 / HTE831)).